The sequence spans 113 residues: Large ribosomal subunit protein uL22 (113 aa).

The protein belongs to the universal ribosomal protein uL22 family. In terms of assembly, part of the 50S ribosomal subunit.

In terms of biological role, this protein binds specifically to 23S rRNA; its binding is stimulated by other ribosomal proteins, e.g. L4, L17, and L20. It is important during the early stages of 50S assembly. It makes multiple contacts with different domains of the 23S rRNA in the assembled 50S subunit and ribosome. The globular domain of the protein is located near the polypeptide exit tunnel on the outside of the subunit, while an extended beta-hairpin is found that lines the wall of the exit tunnel in the center of the 70S ribosome. This Halalkalibacterium halodurans (strain ATCC BAA-125 / DSM 18197 / FERM 7344 / JCM 9153 / C-125) (Bacillus halodurans) protein is Large ribosomal subunit protein uL22.